Consider the following 194-residue polypeptide: NADH-quinone oxidoreductase subunit B 1 (194 aa).

The [4Fe-4S] cluster site is built by Cys47, Cys48, Cys113, and Cys142.

This sequence belongs to the complex I 20 kDa subunit family. As to quaternary structure, NDH-1 is composed of 14 different subunits. Subunits NuoB, C, D, E, F, and G constitute the peripheral sector of the complex. The cofactor is [4Fe-4S] cluster.

It localises to the cell inner membrane. The catalysed reaction is a quinone + NADH + 5 H(+)(in) = a quinol + NAD(+) + 4 H(+)(out). Functionally, NDH-1 shuttles electrons from NADH, via FMN and iron-sulfur (Fe-S) centers, to quinones in the respiratory chain. The immediate electron acceptor for the enzyme in this species is believed to be ubiquinone. Couples the redox reaction to proton translocation (for every two electrons transferred, four hydrogen ions are translocated across the cytoplasmic membrane), and thus conserves the redox energy in a proton gradient. The protein is NADH-quinone oxidoreductase subunit B 1 of Sorangium cellulosum (strain So ce56) (Polyangium cellulosum (strain So ce56)).